The sequence spans 305 residues: NADH-cytochrome b5 reductase 1 (305 aa).

Residues 8–28 (VLLASLGVGLLTLLGVALGAY) traverse the membrane as a helical segment. One can recognise an FAD-binding FR-type domain in the interval 44–156 (NEKYQLRLLD…RGPSGLLTYA (113 aa)). Residues 136–166 (DSLK…IQPN) and 175–210 (VARN…QCFL) each bind FAD.

Belongs to the flavoprotein pyridine nucleotide cytochrome reductase family. FAD serves as cofactor.

The protein resides in the membrane. The enzyme catalyses 2 Fe(III)-[cytochrome b5] + NADH = 2 Fe(II)-[cytochrome b5] + NAD(+) + H(+). In terms of biological role, NADH-cytochrome b5 reductases are involved in desaturation and elongation of fatty acids, cholesterol biosynthesis, drug metabolism, and, in erythrocyte, methemoglobin reduction. This Bos taurus (Bovine) protein is NADH-cytochrome b5 reductase 1 (CYB5R1).